We begin with the raw amino-acid sequence, 153 residues long: Protein ripply2.2 (153 aa).

Positions 58–61 match the WRPW motif; required for transcriptional repression and interaction with tle4 motif; that stretch reads WRPW. Residues 93–128 are ripply homology domain; sequence HPVRLFWPKSKLLDNTYQEAADLLRNFPVQATISLY. Residues 127–153 are disordered; sequence LYNDSESDTDNEEDSSEEEQDSGFESE. The span at 131–153 shows a compositional bias: acidic residues; that stretch reads SESDTDNEEDSSEEEQDSGFESE.

It belongs to the ripply family. As to quaternary structure, interacts with tle4 and tbx6, and mediates interaction between these proteins. In terms of tissue distribution, expressed in the presomitic mesoderm (PSM) in the anterior halves of somitomeres S-I, S-II and S-III.

Its subcellular location is the nucleus. Required during somitogenesis for the formation of somite boundaries. Represses the expression of genes involved in somite segmentation by acting with the corepressor tle4 to down-regulate the transcriptional activity of tbx6. May act by regulating the activity of tle4. Represses transcription of delta2, thy1 and ripply2.2/bowline itself. This chain is Protein ripply2.2 (ripply2.2), found in Xenopus laevis (African clawed frog).